A 310-amino-acid chain; its full sequence is Porphobilinogen deaminase (310 aa).

Position 242 is an S-(dipyrrolylmethanemethyl)cysteine (Cys242).

Belongs to the HMBS family. As to quaternary structure, monomer. The cofactor is dipyrromethane.

The catalysed reaction is 4 porphobilinogen + H2O = hydroxymethylbilane + 4 NH4(+). It participates in porphyrin-containing compound metabolism; protoporphyrin-IX biosynthesis; coproporphyrinogen-III from 5-aminolevulinate: step 2/4. In terms of biological role, tetrapolymerization of the monopyrrole PBG into the hydroxymethylbilane pre-uroporphyrinogen in several discrete steps. This Shewanella sp. (strain ANA-3) protein is Porphobilinogen deaminase.